The primary structure comprises 465 residues: Putative multidrug resistance protein MdtD (465 aa).

13 consecutive transmembrane segments (helical) span residues 12–32 (LWIV…VNTA), 49–69 (SVIV…GWLA), 72–92 (IGVK…SLMC), 102–124 (ILSR…LTVM), 138–158 (FVTL…GFLV), 165–185 (WIFL…LLLM), 195–215 (FDIS…LALD), 219–239 (GLGL…IALG), 267–287 (LVGS…TPIF), 290–310 (IGLG…IIGS), 342–362 (LSLP…VLFF), 393–413 (LLSM…GILL), and 430–450 (SAFL…ALIF).

This sequence belongs to the major facilitator superfamily. TCR/Tet family.

Its subcellular location is the cell inner membrane. This is Putative multidrug resistance protein MdtD from Yersinia pseudotuberculosis serotype O:1b (strain IP 31758).